Reading from the N-terminus, the 1268-residue chain is Neurocan core protein (1268 aa).

Residues 1 to 22 (MGAGSVWASGLLLLWLLLLVAG) form the signal peptide. The region spanning 37–157 (RMLKSGSGPV…EQDLVTLEVT (121 aa)) is the Ig-like V-type domain. 5 disulfides stabilise this stretch: Cys-58-Cys-139, Cys-181-Cys-252, Cys-205-Cys-226, Cys-279-Cys-354, and Cys-303-Cys-324. The N-linked (GlcNAc...) asparagine glycan is linked to Asn-121. 2 consecutive Link domains span residues 159 to 254 (VVFH…YCFA) and 258 to 356 (GGEV…YCFR). An N-linked (GlcNAc...) asparagine glycan is attached at Asn-339. Disordered stretches follow at residues 363-391 (QHGD…ELKP), 406-442 (PLMS…SWPS), 472-540 (PLGT…DQSH), and 574-630 (ISPS…LQAS). O-linked (Xyl...) (chondroitin sulfate) serine glycans are attached at residues Ser-380 and Ser-410. Residues 419 to 430 (TWTQAPEETLGS) show a composition bias toward polar residues. Positions 575-585 (SPSVPSTESTP) are enriched in low complexity. Pro residues predominate over residues 608–617 (PSEPPAPSPG). Residues 618–630 (PSEALSAVSLQAS) are compositionally biased toward low complexity. The N-linked (GlcNAc...) asparagine glycan is linked to Asn-742. The EGF-like 1 domain maps to 960–996 (PTDPCENNPCLHGGTCHTNGTVYGCSCDQGYAGENCE). Cystine bridges form between Cys-964/Cys-975, Cys-969/Cys-984, Cys-986/Cys-995, Cys-1002/Cys-1013, Cys-1007/Cys-1022, Cys-1024/Cys-1033, Cys-1040/Cys-1051, Cys-1068/Cys-1160, Cys-1136/Cys-1152, Cys-1167/Cys-1210, and Cys-1196/Cys-1223. Residue Asn-978 is glycosylated (N-linked (GlcNAc...) asparagine). The EGF-like 2; calcium-binding domain occupies 998-1034 (DIDDCLCSPCENGGTCIDEVNGFICLCLPSYGGSLCE). Residues 1036-1165 (DTEGCDRGWH…LPYVCKKGTV (130 aa)) form the C-type lectin domain. A Sushi domain is found at 1165 to 1225 (VLCGPPPAVE…WDRPQIMCIK (61 aa)). Asn-1175 carries N-linked (GlcNAc...) asparagine glycosylation. Basic residues predominate over residues 1228 to 1255 (RSHRMRRHHHHPHRHHKPRKEHRKHKRH). The disordered stretch occupies residues 1228–1268 (RSHRMRRHHHHPHRHHKPRKEHRKHKRHPAEDWEKDEGDFC).

The protein belongs to the aggrecan/versican proteoglycan family. In terms of processing, O-glycosylated; contains chondroitin sulfate. As to expression, brain.

Its subcellular location is the secreted. Its function is as follows. May modulate neuronal adhesion and neurite growth during development by binding to neural cell adhesion molecules (NG-CAM and N-CAM). Chondroitin sulfate proteoglycan; binds to hyaluronic acid. This Mus musculus (Mouse) protein is Neurocan core protein (Ncan).